The sequence spans 855 residues: tRNA(Met) cytidine acetyltransferase TmcA (855 aa).

ATP is bound by residues Q260, G286–I295, and R438. Residues P480–P663 enclose the N-acetyltransferase domain. Residues I590–T592, M597–S603, E630, and R637 contribute to the acetyl-CoA site.

It belongs to the RNA cytidine acetyltransferase family. TmcA subfamily.

It localises to the cytoplasm. It catalyses the reaction cytidine(34) in elongator tRNA(Met) + acetyl-CoA + ATP + H2O = N(4)-acetylcytidine(34) in elongator tRNA(Met) + ADP + phosphate + CoA + H(+). In terms of biological role, catalyzes the formation of N(4)-acetylcytidine (ac(4)C) at the wobble position of tRNA(Met), by using acetyl-CoA as an acetyl donor and ATP (or GTP). The polypeptide is tRNA(Met) cytidine acetyltransferase TmcA (Methanopyrus kandleri (strain AV19 / DSM 6324 / JCM 9639 / NBRC 100938)).